Reading from the N-terminus, the 192-residue chain is Fanconi anemia core complex-associated protein 20 (192 aa).

Over residues 1-16 (MEATRRSRLSLSRRRP) the composition is skewed to basic residues. Disordered stretches follow at residues 1-34 (MEAT…PDGG) and 51-151 (LNVD…SSVD). Positions 66 to 76 (QEPRRSPERPP) are enriched in basic and acidic residues. Residues S119 and S149 each carry the phosphoserine modification. Low complexity predominate over residues 132 to 149 (PSAEEQPSEEQPSQRQSS). The UBZ2-type zinc finger occupies 156–192 (LQSCPMCQVDFAPGLAQLDIDGHLAQCLADSTDDIEW). Residues C159, C162, H178, and C182 each coordinate Zn(2+).

As to quaternary structure, component of the Fanconi anemia (FA) complex. Interacts with FANCA; interaction is direct. Interacts with REV1.

It is found in the nucleus. The protein localises to the chromosome. Its function is as follows. Component of the Fanconi anemia (FA) complex required to recruit the FA complex to DNA interstrand cross-links (ICLs) and promote ICLs repair. Following DNA damage recognizes and binds 'Lys-63'-linked ubiquitin generated by RNF8 at ICLs and recruits other components of the FA complex. Promotes translesion synthesis via interaction with REV1. In Bos taurus (Bovine), this protein is Fanconi anemia core complex-associated protein 20.